The following is a 239-amino-acid chain: Suppressor of organelle fusion 1 (239 aa).

It belongs to the WD repeat WDR91 family. As to quaternary structure, interacts with sorf-2; the interaction is direct. Interacts with bec-1.

It is found in the early endosome. It localises to the late endosome. Its subcellular location is the cytoplasm. Together with sorf-2 negatively regulates the levels of phosphatidylinositol 3-phosphate (PtdIns3P) to enable the conversion of early endosomes to late endosomes. Binds to sorf-2 and the sorf-1-sorf-2 complex likely acts through bec-1, a non-catalytic subunit of phosphatidylinositol 3-kinase (PI3K), to suppress PI3K activity, thereby negatively regulating endosomal PtdIns3P levels. The polypeptide is Suppressor of organelle fusion 1 (Caenorhabditis elegans).